We begin with the raw amino-acid sequence, 92 residues long: LYR motif-containing protein 4A (92 aa).

The protein belongs to the complex I LYR family.

The polypeptide is LYR motif-containing protein 4A (lyrm4a) (Salmo salar (Atlantic salmon)).